The following is a 555-amino-acid chain: Glutamine--tRNA ligase (555 aa).

Residues 34 to 44 carry the 'HIGH' region motif; that stretch reads PEPNGYLHIGH. ATP is bound by residues 35–37 and 41–47; these read EPN and HIGHAKS. L-glutamine contacts are provided by aspartate 67 and tyrosine 212. ATP is bound by residues threonine 231, 261–262, and 269–271; these read RL and MSK. Residues 268 to 272 carry the 'KMSKS' region motif; sequence VMSKR. The interaction with tRNA stretch occupies residues 317 to 324; it reads TKQDNTIE.

This sequence belongs to the class-I aminoacyl-tRNA synthetase family. Monomer.

The protein localises to the cytoplasm. It carries out the reaction tRNA(Gln) + L-glutamine + ATP = L-glutaminyl-tRNA(Gln) + AMP + diphosphate. This is Glutamine--tRNA ligase from Salmonella choleraesuis (strain SC-B67).